Here is a 211-residue protein sequence, read N- to C-terminus: FMN-dependent NADH:quinone oxidoreductase 2 (211 aa).

FMN-binding positions include S10 and 17 to 19 (SRS).

The protein belongs to the azoreductase type 1 family. Homodimer. It depends on FMN as a cofactor.

The catalysed reaction is 2 a quinone + NADH + H(+) = 2 a 1,4-benzosemiquinone + NAD(+). It catalyses the reaction N,N-dimethyl-1,4-phenylenediamine + anthranilate + 2 NAD(+) = 2-(4-dimethylaminophenyl)diazenylbenzoate + 2 NADH + 2 H(+). Functionally, quinone reductase that provides resistance to thiol-specific stress caused by electrophilic quinones. Its function is as follows. Also exhibits azoreductase activity. Catalyzes the reductive cleavage of the azo bond in aromatic azo compounds to the corresponding amines. This Listeria monocytogenes serovar 1/2a (strain ATCC BAA-679 / EGD-e) protein is FMN-dependent NADH:quinone oxidoreductase 2.